Consider the following 134-residue polypeptide: ATP synthase epsilon chain (134 aa).

The protein belongs to the ATPase epsilon chain family. In terms of assembly, F-type ATPases have 2 components, CF(1) - the catalytic core - and CF(0) - the membrane proton channel. CF(1) has five subunits: alpha(3), beta(3), gamma(1), delta(1), epsilon(1). CF(0) has three main subunits: a, b and c.

The protein resides in the cell membrane. In terms of biological role, produces ATP from ADP in the presence of a proton gradient across the membrane. This Listeria monocytogenes serotype 4b (strain F2365) protein is ATP synthase epsilon chain.